The chain runs to 615 residues: Medium-chain acyl-CoA ligase ACSF2, mitochondrial (615 aa).

Residues 1–49 (MAVYLGMLRLGRLCVASLGARGPRTPLSRPWPNSKLQGVRAFSSGMVDC) constitute a mitochondrion transit peptide. Lys-179 is modified (N6-acetyllysine). Lys-182 bears the N6-acetyllysine; alternate mark. Residue Lys-182 is modified to N6-succinyllysine; alternate. N6-acetyllysine is present on Lys-199. 263 to 271 (TSGTTGNPK) is an ATP binding site. N6-acetyllysine is present on residues Lys-340 and Lys-398. Lys-478 is modified (N6-succinyllysine). ATP-binding residues include Asp-493 and Arg-508. Lys-510 carries the N6-acetyllysine modification. An N6-acetyllysine; alternate mark is found at Lys-544 and Lys-570. 2 positions are modified to N6-succinyllysine; alternate: Lys-544 and Lys-570. Residue Lys-599 participates in ATP binding. At Lys-599 the chain carries N6-succinyllysine.

The protein belongs to the ATP-dependent AMP-binding enzyme family.

Its subcellular location is the mitochondrion. It catalyses the reaction a medium-chain fatty acid + ATP + CoA = a medium-chain fatty acyl-CoA + AMP + diphosphate. It carries out the reaction octanoate + ATP + CoA = octanoyl-CoA + AMP + diphosphate. Its function is as follows. Acyl-CoA synthases catalyze the initial reaction in fatty acid metabolism, by forming a thioester with CoA. Has some preference toward medium-chain substrates. Plays a role in adipocyte differentiation. The chain is Medium-chain acyl-CoA ligase ACSF2, mitochondrial from Rattus norvegicus (Rat).